We begin with the raw amino-acid sequence, 341 residues long: tRNA N6-adenosine threonylcarbamoyltransferase (341 aa).

Residues His-111 and His-115 each coordinate Fe cation. Residues 134 to 138 (LVSGG), Asp-167, Gly-180, and Asn-276 contribute to the substrate site. Position 304 (Asp-304) interacts with Fe cation.

This sequence belongs to the KAE1 / TsaD family. The cofactor is Fe(2+).

Its subcellular location is the cytoplasm. The catalysed reaction is L-threonylcarbamoyladenylate + adenosine(37) in tRNA = N(6)-L-threonylcarbamoyladenosine(37) in tRNA + AMP + H(+). Functionally, required for the formation of a threonylcarbamoyl group on adenosine at position 37 (t(6)A37) in tRNAs that read codons beginning with adenine. Is involved in the transfer of the threonylcarbamoyl moiety of threonylcarbamoyl-AMP (TC-AMP) to the N6 group of A37, together with TsaE and TsaB. TsaD likely plays a direct catalytic role in this reaction. This chain is tRNA N6-adenosine threonylcarbamoyltransferase, found in Pseudomonas putida (strain W619).